Reading from the N-terminus, the 603-residue chain is Probable GMP synthase [glutamine-hydrolyzing] (603 aa).

The Glutamine amidotransferase type-1 domain occupies 6–195; that stretch reads KIAVVDFGGQ…FIQICGVSKT (190 aa). The active-site Nucleophile is the Cys-81. Active-site residues include His-170 and Glu-172. One can recognise a GMPS ATP-PPase domain in the interval 196-392; that stretch reads WGIDQFLKEK…LGLESEWVGR (197 aa). 224–230 contributes to the ATP binding site; it reads SGGVDST.

Homodimer.

It catalyses the reaction XMP + L-glutamine + ATP + H2O = GMP + L-glutamate + AMP + diphosphate + 2 H(+). It functions in the pathway purine metabolism; GMP biosynthesis; GMP from XMP (L-Gln route): step 1/1. In terms of biological role, catalyzes the synthesis of GMP from XMP. The polypeptide is Probable GMP synthase [glutamine-hydrolyzing] (guaA) (Leptospira interrogans serogroup Icterohaemorrhagiae serovar copenhageni (strain Fiocruz L1-130)).